Here is a 70-residue protein sequence, read N- to C-terminus: Probable non-specific lipid-transfer protein 2 (70 aa).

4 cysteine pairs are disulfide-bonded: Cys-4-Cys-38, Cys-12-Cys-26, Cys-27-Cys-62, and Cys-36-Cys-69.

Functionally, potential phospholipid transfer protein. In Zea mays (Maize), this protein is Probable non-specific lipid-transfer protein 2.